A 664-amino-acid polypeptide reads, in one-letter code: UvrABC system protein C (664 aa).

One can recognise a GIY-YIG domain in the interval 63-141 (LRPGVYRMYD…IKRYRPPYNI (79 aa)). The UVR domain occupies 254–289 (THVQKKLVTAMEQASNDLNYELAAVYRDRLKALAFI).

It belongs to the UvrC family. Interacts with UvrB in an incision complex.

Its subcellular location is the cytoplasm. Its function is as follows. The UvrABC repair system catalyzes the recognition and processing of DNA lesions. UvrC both incises the 5' and 3' sides of the lesion. The N-terminal half is responsible for the 3' incision and the C-terminal half is responsible for the 5' incision. In Zymomonas mobilis subsp. mobilis (strain ATCC 31821 / ZM4 / CP4), this protein is UvrABC system protein C.